The primary structure comprises 663 residues: Zeaxanthin epoxidase, chloroplastic (663 aa).

The transit peptide at 1–50 (MYSTVFYTSVHPSTSAFSRKQLPLLISKDFPTELYHSLPCSRSLENGQIK) directs the protein to the chloroplast. FAD is bound by residues 81 to 109 (KVLV…LVFE) and 359 to 372 (TFSW…LLGD). One can recognise an FHA domain in the interval 547-611 (LVLSRDENMP…HGTWITDNEG (65 aa)).

It depends on FAD as a cofactor. In terms of tissue distribution, higher expression in leaves than in roots.

The protein resides in the plastid. Its subcellular location is the chloroplast membrane. The protein localises to the chloroplast thylakoid membrane. It catalyses the reaction all-trans-zeaxanthin + 4 reduced [2Fe-2S]-[ferredoxin] + 2 O2 + 4 H(+) = all-trans-violaxanthin + 4 oxidized [2Fe-2S]-[ferredoxin] + 2 H2O. It participates in plant hormone biosynthesis; abscisate biosynthesis. Converts zeaxanthin into antheraxanthin and subsequently violaxanthin. Involved in the epoxidation of zeaxanthin. Plays an important role in resistance to stresses, seed development and dormancy. The polypeptide is Zeaxanthin epoxidase, chloroplastic (ABA2) (Nicotiana plumbaginifolia (Leadwort-leaved tobacco)).